The chain runs to 371 residues: Probable F-box protein At1g65740 (371 aa).

The region spanning 2–49 is the F-box domain; the sequence is VDWSTLPEELLHFIAARSFSLVEYKRFSSICVSWHSSVSGVKKNPFHR.

The protein is Probable F-box protein At1g65740 of Arabidopsis thaliana (Mouse-ear cress).